Reading from the N-terminus, the 830-residue chain is MTSALRVLVCGDHPNLILYTSRFQHAKNIEFYLVNNSKNANYEVSSLFYGTERFQIQNHFQSLLDLVDLNNENGGLVFDLIIMSASSLQEIPQVLRDIKPMMNKTTKILFESSGFIYLEPFIKASVDLSLSNIFSIFTDYDIRRLDNGSYKQFTTANAKSFSVSIGQTTSVHENSYSSDIIPILNTFQKLFQKLFPRDVVTLYDHSPSAFLAKEWELALPQICFDPLLIILEEKNPSTLDDHVLAKPLISGLLGESLLIIKKMGIAMNNPNFQNEQTILKHWKNKCEDLPDGPALLYNFIHKASSLNIDLLLLQPILLADDFGVKTPYLECLFTMMTQYQLLNKGDSEWFIRKDENTALTRVDDLQNSIALKDGKIMQLQNSESTLKNEIKELQSQVLSLKQEVSSSKANNGQELEILKKKVQMGDNSLFDRPNSNTNGISPSDNIVDVDLNYERSDQGNNSSGNDSRRQSFFNSTSDTTLSRDETSLKERELEVRMKELELQERELELQRKALQQQQQYQQRPPKQVYSGPSGTPTSGNNNNKSYNPNRKSSYSQPQHVAMMTSRGLHGPSAASSSPVISANNFVDPVSSGTPYSSNSSRFSQQIPSQQYMHTVKPTSRKNRSSVMPNIGYVPGLTNNEYGRKFNGNGMNGTQSRLNSLSNQSTFRSQQGPPITQQKSFQNNGGSMRTNRIPSANYNISNQQSGFVNSISSPNLSNLENRNTVQNSRNADSAPCVNQLNSDSPPQLQSLSQNGTSKVPQINITQPSPIQTNFATSDNPAAVIKLGTPSEDTVSAAATANNISTMGDESRKEDVKEKKKKKFSFFGKRKK.

The stretch at 379-400 (LQNSESTLKNEIKELQSQVLSL) forms a coiled coil. 4 disordered regions span residues 426–488 (DNSL…ETSL), 513–558 (ALQQ…SQPQ), 648–699 (NGMN…NYNI), and 727–757 (SRNA…GTSK). Over residues 433 to 444 (PNSNTNGISPSD) the composition is skewed to polar residues. The stretch at 481–514 (LSRDETSLKERELEVRMKELELQERELELQRKAL) forms a coiled coil. Composition is skewed to low complexity over residues 513–527 (ALQQ…PPKQ) and 538–555 (SGNN…SSYS). A compositionally biased stretch (polar residues) spans 651–699 (NGTQSRLNSLSNQSTFRSQQGPPITQQKSFQNNGGSMRTNRIPSANYNI). Phosphoserine is present on residues S659 and S732. The span at 738-753 (QLNSDSPPQLQSLSQN) shows a compositional bias: low complexity. S767 bears the Phosphoserine mark. Residues 796 to 806 (AATANNISTMG) are compositionally biased toward polar residues. Residues 796–830 (AATANNISTMGDESRKEDVKEKKKKKFSFFGKRKK) form a disordered region. Positions 807–816 (DESRKEDVKE) are enriched in basic and acidic residues. Residues 817–830 (KKKKKFSFFGKRKK) are compositionally biased toward basic residues.

Belongs to the PAM1/SVL3 family.

In terms of biological role, not known. It is a suppressor of protein phosphatase 2A depletion. This is Protein PAM1 (PAM1) from Saccharomyces cerevisiae (strain ATCC 204508 / S288c) (Baker's yeast).